We begin with the raw amino-acid sequence, 152 residues long: Pseudo histidine-containing phosphotransfer protein 5 (152 aa).

The 103-residue stretch at 38–140 (NPNFAEEVVS…ESYFQLLRQA (103 aa)) folds into the HPt domain.

Its function is as follows. Functions as a two-component phosphorelay mediator between cytokinin sensor histidine kinases and response regulators (B-type ARRs). Plays an important role in propagating cytokinin signal transduction. This is Pseudo histidine-containing phosphotransfer protein 5 from Oryza sativa subsp. japonica (Rice).